The following is a 305-amino-acid chain: D-alanine--D-alanine ligase (305 aa).

Residues 99–300 (KLFFEKAGIR…YEEMIQTFVN (202 aa)) form the ATP-grasp domain. 126-181 (NFTGTYPVVVKPNQEGSTIGLTVAETEEELLQGIEEAFRHDDTILIEEFIAGTEVT) is an ATP binding site.

Belongs to the D-alanine--D-alanine ligase family.

The protein localises to the cytoplasm. It carries out the reaction 2 D-alanine + ATP = D-alanyl-D-alanine + ADP + phosphate + H(+). Its pathway is cell wall biogenesis; peptidoglycan biosynthesis. Functionally, cell wall formation. This is D-alanine--D-alanine ligase from Halalkalibacterium halodurans (strain ATCC BAA-125 / DSM 18197 / FERM 7344 / JCM 9153 / C-125) (Bacillus halodurans).